We begin with the raw amino-acid sequence, 623 residues long: DNA polymerase alpha subunit B (623 aa).

Residues 113–151 form a disordered region; the sequence is IPKIKDEPSSSVDVSTARNKNNHNNNNNNNPSLPNKSMF. Residues 121 to 130 are compositionally biased toward polar residues; that stretch reads SSSVDVSTAR.

It belongs to the DNA polymerase alpha subunit B family. In terms of assembly, DNA polymerase alpha:primase is a four subunit enzyme complex, which is assembled throughout the cell cycle, and consists of the two DNA polymerase subunits A and B, and the DNA primase large and small subunits. Subunit B binds to subunit A.

It localises to the nucleus. Its function is as follows. May play an essential role at the early stage of chromosomal DNA replication by coupling the polymerase alpha/primase complex to the cellular replication machinery. The polypeptide is DNA polymerase alpha subunit B (polA2) (Dictyostelium discoideum (Social amoeba)).